The primary structure comprises 186 residues: Shikimate kinase (186 aa).

Residue Gly21 to Thr26 participates in ATP binding. A Mg(2+)-binding site is contributed by Thr25. Positions 43, 67, and 90 each coordinate substrate. Position 129 (Arg129) interacts with ATP. Arg147 provides a ligand contact to substrate.

It belongs to the shikimate kinase family. Monomer. Requires Mg(2+) as cofactor.

Its subcellular location is the cytoplasm. The catalysed reaction is shikimate + ATP = 3-phosphoshikimate + ADP + H(+). The protein operates within metabolic intermediate biosynthesis; chorismate biosynthesis; chorismate from D-erythrose 4-phosphate and phosphoenolpyruvate: step 5/7. In terms of biological role, catalyzes the specific phosphorylation of the 3-hydroxyl group of shikimic acid using ATP as a cosubstrate. This chain is Shikimate kinase, found in Bacillus subtilis (strain 168).